Here is a 130-residue protein sequence, read N- to C-terminus: MIQIDPRSSTPIYEQIIQQMKELCLKGIMKPGDKLPSVRELATIIIANPNTVSKAYKELEREGIIETLRGRGTYISENAKTTLVEGKMTMIKEQLKQLIIDAHYAGVELEKLHEWIKEISADVKGGKKND.

One can recognise an HTH gntR-type domain in the interval 10 to 78; that stretch reads TPIYEQIIQQ…RGRGTYISEN (69 aa). A DNA-binding region (H-T-H motif) is located at residues 38-57; it reads VRELATIIIANPNTVSKAYK.

In terms of biological role, negatively regulates ABC transporter complex ytrBCDEF that plays a role in acetoin utilization during stationary phase and sporulation. The chain is HTH-type transcriptional repressor YtrA (ytrA) from Bacillus subtilis (strain 168).